A 265-amino-acid chain; its full sequence is tRNA pseudouridine synthase A (265 aa).

Catalysis depends on D58, which acts as the Nucleophile. Y116 contacts substrate.

Belongs to the tRNA pseudouridine synthase TruA family. Homodimer.

The enzyme catalyses uridine(38/39/40) in tRNA = pseudouridine(38/39/40) in tRNA. Functionally, formation of pseudouridine at positions 38, 39 and 40 in the anticodon stem and loop of transfer RNAs. This is tRNA pseudouridine synthase A from Neisseria meningitidis serogroup C (strain 053442).